We begin with the raw amino-acid sequence, 141 residues long: Hemoglobin D subunit alpha (141 aa).

The 141-residue stretch at 1–141 (MLTEDDKQLI…VSAVLAEKYR (141 aa)) folds into the Globin domain. His58 contributes to the O2 binding site. Heme b is bound at residue His87.

This sequence belongs to the globin family. In terms of assembly, tetramer of two alpha chains and two beta chains. Red blood cells.

Functionally, involved in oxygen transport from the lung to the various peripheral tissues. This chain is Hemoglobin D subunit alpha, found in Aldabrachelys gigantea (Aldabra giant tortoise).